Reading from the N-terminus, the 117-residue chain is Large ribosomal subunit protein bL20 (117 aa).

Belongs to the bacterial ribosomal protein bL20 family.

Binds directly to 23S ribosomal RNA and is necessary for the in vitro assembly process of the 50S ribosomal subunit. It is not involved in the protein synthesizing functions of that subunit. In Rickettsia rickettsii (strain Iowa), this protein is Large ribosomal subunit protein bL20.